The chain runs to 225 residues: PKHD-type hydroxylase YbiX (225 aa).

A Fe2OG dioxygenase domain is found at 78–177 (TLSTPLFNRY…RVASFMWIQS (100 aa)). 3 residues coordinate Fe cation: H96, D98, and H158. Residue R168 participates in 2-oxoglutarate binding.

It depends on Fe(2+) as a cofactor. L-ascorbate serves as cofactor.

This is PKHD-type hydroxylase YbiX from Escherichia fergusonii (strain ATCC 35469 / DSM 13698 / CCUG 18766 / IAM 14443 / JCM 21226 / LMG 7866 / NBRC 102419 / NCTC 12128 / CDC 0568-73).